Reading from the N-terminus, the 188-residue chain is Myc target protein 1 (188 aa).

The chain crosses the membrane as a helical span at residues 24-44 (FTVSVAIGLAIGGFLWALFVF). A Bipartite nuclear localization signal motif is present at residues 47 to 65 (RRRRASAPISQWSPTRRPR). 4 positions are modified to phosphoserine: Ser87, Ser90, Ser93, and Ser101.

The protein belongs to the MYCT1 family. In terms of tissue distribution, highly expressed in lung, heart, and skeletal muscle. Expressed in brain, eye, liver, kidney, smooth muscle, pancreas, thyroid, thymus, submaxillary gland, spleen, testis, ovary, prostate, epididymis, and uterus. Deregulated expression promotes apoptosis in response to growth factor deprivation. Overexpression in synergy with CCNB1 may promote genomic instability.

Its subcellular location is the nucleus membrane. Functionally, may regulate certain MYC target genes, MYC seems to be a direct upstream transcriptional activator. Does not seem to significantly affect growth cell capacity. Overexpression seems to mediate many of the known phenotypic features associated with MYC, including promotion of apoptosis, alteration of morphology, enhancement of anchorage-independent growth, tumorigenic conversion, promotion of genomic instability and inhibition of hematopoietic differentiation. This Mus musculus (Mouse) protein is Myc target protein 1 (Myct1).